We begin with the raw amino-acid sequence, 236 residues long: CDP-diacylglycerol--glycerol-3-phosphate 3-phosphatidyltransferase (236 aa).

A run of 5 helical transmembrane segments spans residues 39–59, 66–86, 120–140, 163–183, and 196–216; these read IFIA…GVLA, ISIS…TAVI, VLIA…VFIV, WLGK…CFVW, and GLFF…FSIW.

The protein belongs to the CDP-alcohol phosphatidyltransferase class-I family.

The protein localises to the cell membrane. It catalyses the reaction a CDP-1,2-diacyl-sn-glycerol + sn-glycerol 3-phosphate = a 1,2-diacyl-sn-glycero-3-phospho-(1'-sn-glycero-3'-phosphate) + CMP + H(+). It functions in the pathway phospholipid metabolism; phosphatidylglycerol biosynthesis; phosphatidylglycerol from CDP-diacylglycerol: step 1/2. This protein catalyzes the committed step to the synthesis of the acidic phospholipids. This Mycoplasma genitalium (strain ATCC 33530 / DSM 19775 / NCTC 10195 / G37) (Mycoplasmoides genitalium) protein is CDP-diacylglycerol--glycerol-3-phosphate 3-phosphatidyltransferase (pgsA).